Consider the following 742-residue polypeptide: MEHIYQYAWIIPFLPLPVPLLIGAGLLFFPTATKNLRRIWAFSSISLLSIVMIFSMKLAIQQINSNSIYQYLWSWTINNDFSLEFGYLMDPLTSIMSMLITTVAILVLIYSDNYMSHDQGYLRFFAYMSFFNTSMLGLVTSSNLIQIYIFWELVGMCSYLLIGFWFTRPIAANACQKAFVTNRVGDFGLLLGILGLYWITGSFEFRDLFEIFNNLIKNNEVNSLFCILCAFLLFAGAVAKSAQFPLHVWLPDAMEGPTPISALIHAATMVAAGIFLVARLLPLFVVIPYIMYVISFIGIITVLLGATLALAQKDIKRSLAYYTMSQLGYMMLALGMGSYRTALFHLITHAYSKALLFLASGSLIHSMGTIVGYSPDKSQNMVLMGGLTKHVPITKTSFLIGTLSLCGIPPLACFWSKDEILNDSWVYSPIFAIIAYFTAGLTAFYMFRIYLLTFEGHLNFFCKNYSGKKSSSFYSISLWGKKELKTINQKISLLNLLTMNNKERASFFSKKPYEINVKLTKLLRSFITITYFENKNISLYPYESDNTMLFPLIILIMFTLFVGFIGIPFNQEGMDLDILTKWLTPSINLLHSNSENFVDWYEFVINAIFSISIAFFGIFIAFFFYKPIYSSLKNFDLINSFDKRGQKRILGDNIITIIYNWSANRGYIDAFYSTFLIKGIRSLSELVSFFDRRIIDGIPNGFGVTSFFVGEGIKYVGGGRISSYLFWYLLYVSIFLFIFTFT.

16 consecutive transmembrane segments (helical) span residues 9–29 (WIIPFLPLPVPLLIGAGLLFF), 39–59 (IWAFSSISLLSIVMIFSMKLA), 91–111 (PLTSIMSMLITTVAILVLIYS), 125–145 (FAYMSFFNTSMLGLVTSSNLI), 147–167 (IYIFWELVGMCSYLLIGFWFT), 185–205 (GDFGLLLGILGLYWITGSFEF), 224–244 (LFCILCAFLLFAGAVAKSAQF), 258–278 (TPISALIHAATMVAAGIFLVA), 280–300 (LLPLFVVIPYIMYVISFIGII), 327–347 (LGYMMLALGMGSYRTALFHLI), 354–374 (ALLFLASGSLIHSMGTIVGYS), 396–416 (TSFLIGTLSLCGIPPLACFWS), 425–445 (WVYSPIFAIIAYFTAGLTAFY), 549–569 (LFPLIILIMFTLFVGFIGIPF), 603–623 (FVINAIFSISIAFFGIFIAFF), and 721–741 (ISSYLFWYLLYVSIFLFIFTF).

This sequence belongs to the complex I subunit 5 family. In terms of assembly, NDH is composed of at least 16 different subunits, 5 of which are encoded in the nucleus.

It is found in the plastid. The protein localises to the chloroplast thylakoid membrane. It carries out the reaction a plastoquinone + NADH + (n+1) H(+)(in) = a plastoquinol + NAD(+) + n H(+)(out). It catalyses the reaction a plastoquinone + NADPH + (n+1) H(+)(in) = a plastoquinol + NADP(+) + n H(+)(out). NDH shuttles electrons from NAD(P)H:plastoquinone, via FMN and iron-sulfur (Fe-S) centers, to quinones in the photosynthetic chain and possibly in a chloroplast respiratory chain. The immediate electron acceptor for the enzyme in this species is believed to be plastoquinone. Couples the redox reaction to proton translocation, and thus conserves the redox energy in a proton gradient. In Spinacia oleracea (Spinach), this protein is NAD(P)H-quinone oxidoreductase subunit 5, chloroplastic (ndhF).